We begin with the raw amino-acid sequence, 414 residues long: CinA-like protein (414 aa).

This sequence belongs to the CinA family.

This chain is CinA-like protein, found in Akkermansia muciniphila (strain ATCC BAA-835 / DSM 22959 / JCM 33894 / BCRC 81048 / CCUG 64013 / CIP 107961 / Muc).